A 629-amino-acid chain; its full sequence is tRNA uridine 5-carboxymethylaminomethyl modification enzyme MnmG (629 aa).

13–18 (GGGHAG) serves as a coordination point for FAD. 273 to 287 (GPRYCPSIEDKIHRF) serves as a coordination point for NAD(+).

The protein belongs to the MnmG family. As to quaternary structure, homodimer. Heterotetramer of two MnmE and two MnmG subunits. It depends on FAD as a cofactor.

Its subcellular location is the cytoplasm. Functionally, NAD-binding protein involved in the addition of a carboxymethylaminomethyl (cmnm) group at the wobble position (U34) of certain tRNAs, forming tRNA-cmnm(5)s(2)U34. The chain is tRNA uridine 5-carboxymethylaminomethyl modification enzyme MnmG from Shewanella baltica (strain OS155 / ATCC BAA-1091).